A 258-amino-acid chain; its full sequence is Phosphate import ATP-binding protein PstB (258 aa).

In terms of domain architecture, ABC transporter spans 5 to 247 (IDVSGLTAYY…ERIFSNPSVQ (243 aa)). 37-44 (GPSGCGKS) serves as a coordination point for ATP.

The protein belongs to the ABC transporter superfamily. Phosphate importer (TC 3.A.1.7) family. As to quaternary structure, the complex is composed of two ATP-binding proteins (PstB), two transmembrane proteins (PstC and PstA) and a solute-binding protein (PstS).

The protein localises to the cell membrane. The catalysed reaction is phosphate(out) + ATP + H2O = ADP + 2 phosphate(in) + H(+). Part of the ABC transporter complex PstSACB involved in phosphate import. Responsible for energy coupling to the transport system. This Streptomyces avermitilis (strain ATCC 31267 / DSM 46492 / JCM 5070 / NBRC 14893 / NCIMB 12804 / NRRL 8165 / MA-4680) protein is Phosphate import ATP-binding protein PstB.